We begin with the raw amino-acid sequence, 384 residues long: S-adenosylmethionine synthase (384 aa).

An ATP-binding site is contributed by His15. Mg(2+) is bound at residue Asp17. Position 43 (Glu43) interacts with K(+). L-methionine is bound by residues Glu56 and Gln99. The interval Gln99–Arg109 is flexible loop. Residues Asp164–Lys166, Arg231–Phe232, Asp240, Arg246–Lys247, Ala263, and Lys267 contribute to the ATP site. Asp240 is a binding site for L-methionine. Lys271 is an L-methionine binding site.

It belongs to the AdoMet synthase family. In terms of assembly, homotetramer; dimer of dimers. Requires Mg(2+) as cofactor. K(+) is required as a cofactor.

Its subcellular location is the cytoplasm. It catalyses the reaction L-methionine + ATP + H2O = S-adenosyl-L-methionine + phosphate + diphosphate. It functions in the pathway amino-acid biosynthesis; S-adenosyl-L-methionine biosynthesis; S-adenosyl-L-methionine from L-methionine: step 1/1. Catalyzes the formation of S-adenosylmethionine (AdoMet) from methionine and ATP. The overall synthetic reaction is composed of two sequential steps, AdoMet formation and the subsequent tripolyphosphate hydrolysis which occurs prior to release of AdoMet from the enzyme. This is S-adenosylmethionine synthase from Shewanella piezotolerans (strain WP3 / JCM 13877).